Consider the following 269-residue polypeptide: MPGNKIGLLNVHHRVKLLYGEGLHIRNLTPGTEIAFYVPNNSTPQGDGVAVVMSGEKMKVIIVEDEFLAQQELSWLINTHSQMEIVGSFDDGLDVLKFLQHNKVDAIFLDINIPSLDGVLLAQNISQFAHKPFIVFITAWKEHAVEAFELEAFDYILKPYQESRIINMLQKLTTAWEQQNNAASGLASAAPRENDTINLIKDERIIVTSIHDIYYAEAHEKMTFVYTRRESFVMPMNITEFVPDALNIAASGQSKFLLTVAQVSIANRF.

The Response regulatory domain maps to 59–173 (KVIIVEDEFL…RIINMLQKLT (115 aa)). Asp110 carries the 4-aspartylphosphate modification. The region spanning 197–269 (INLIKDERII…VAQVSIANRF (73 aa)) is the HTH LytTR-type domain.

In terms of biological role, may be involved in the regulation of fimbrial expression. The protein is Protein MrkE (mrkE) of Klebsiella pneumoniae.